A 1081-amino-acid chain; its full sequence is DNA-directed RNA polymerase subunit beta (1081 aa).

The protein belongs to the RNA polymerase beta chain family. In plastids the minimal PEP RNA polymerase catalytic core is composed of four subunits: alpha, beta, beta', and beta''. When a (nuclear-encoded) sigma factor is associated with the core the holoenzyme is formed, which can initiate transcription.

It is found in the plastid. The protein resides in the chloroplast. The catalysed reaction is RNA(n) + a ribonucleoside 5'-triphosphate = RNA(n+1) + diphosphate. In terms of biological role, DNA-dependent RNA polymerase catalyzes the transcription of DNA into RNA using the four ribonucleoside triphosphates as substrates. The protein is DNA-directed RNA polymerase subunit beta of Cyanidium caldarium (Red alga).